The primary structure comprises 570 residues: Urease subunit alpha (570 aa).

Residues 131 to 570 (GGVDTHIHFI…LPMAQRYFLF (440 aa)) form the Urease domain. Ni(2+) contacts are provided by histidine 136, histidine 138, and lysine 219. At lysine 219 the chain carries N6-carboxylysine. Histidine 221 serves as a coordination point for substrate. The Ni(2+) site is built by histidine 248 and histidine 274. Residue histidine 322 is the Proton donor of the active site. Aspartate 362 is a binding site for Ni(2+).

The protein belongs to the metallo-dependent hydrolases superfamily. Urease alpha subunit family. In terms of assembly, heterotrimer of UreA (gamma), UreB (beta) and UreC (alpha) subunits. Three heterotrimers associate to form the active enzyme. It depends on Ni cation as a cofactor. Carboxylation allows a single lysine to coordinate two nickel ions.

The protein localises to the cytoplasm. The catalysed reaction is urea + 2 H2O + H(+) = hydrogencarbonate + 2 NH4(+). The protein operates within nitrogen metabolism; urea degradation; CO(2) and NH(3) from urea (urease route): step 1/1. In Methylocella silvestris (strain DSM 15510 / CIP 108128 / LMG 27833 / NCIMB 13906 / BL2), this protein is Urease subunit alpha.